We begin with the raw amino-acid sequence, 872 residues long: Valine--tRNA ligase (872 aa).

The 'HIGH' region signature appears at 49–59 (PNVTGILHIGH). The 'KMSKS' region signature appears at 531 to 535 (KMSKS). Position 534 (Lys534) interacts with ATP. Residues 810–871 (PLIARLKKQL…IQQELDLLEQ (62 aa)) adopt a coiled-coil conformation.

This sequence belongs to the class-I aminoacyl-tRNA synthetase family. ValS type 1 subfamily. In terms of assembly, monomer.

The protein resides in the cytoplasm. The catalysed reaction is tRNA(Val) + L-valine + ATP = L-valyl-tRNA(Val) + AMP + diphosphate. Its function is as follows. Catalyzes the attachment of valine to tRNA(Val). As ValRS can inadvertently accommodate and process structurally similar amino acids such as threonine, to avoid such errors, it has a 'posttransfer' editing activity that hydrolyzes mischarged Thr-tRNA(Val) in a tRNA-dependent manner. The protein is Valine--tRNA ligase of Helicobacter pylori (strain J99 / ATCC 700824) (Campylobacter pylori J99).